A 147-amino-acid chain; its full sequence is MKALIILGFLFLSVAVQGKVFERCELARTLKKLGLDGYKGVSLANWLCLTKWESSYNTKATNYNPSSESTDYGIFQINSKWWCNDGKTPNAVDGCHVSCSELMENDIAKAVACAKHIVSEQGITAWVAWKSHCRDHDVSSYVQGCTL.

The N-terminal stretch at 1-18 (MKALIILGFLFLSVAVQG) is a signal peptide. The C-type lysozyme domain maps to 19-147 (KVFERCELAR…VSSYVQGCTL (129 aa)). Intrachain disulfides connect Cys24-Cys145, Cys48-Cys133, Cys83-Cys99, and Cys95-Cys113. Active-site residues include Glu53 and Asp71.

Belongs to the glycosyl hydrolase 22 family. Monomer. As to expression, stomach-specific.

The enzyme catalyses Hydrolysis of (1-&gt;4)-beta-linkages between N-acetylmuramic acid and N-acetyl-D-glucosamine residues in a peptidoglycan and between N-acetyl-D-glucosamine residues in chitodextrins.. Lysozymes have primarily a bacteriolytic function; those in tissues and body fluids are associated with the monocyte-macrophage system and enhance the activity of immunoagents. This chain is Lysozyme C-3 (LYZ3), found in Bos taurus (Bovine).